A 531-amino-acid chain; its full sequence is Probable rhamnogalacturonate lyase A (531 aa).

A signal peptide spans 1–20 (MLSKALFFSSLPLWAKVASA). Disulfide bonds link C50–C93 and C184–C193. N-linked (GlcNAc...) asparagine glycosylation is present at N351.

This sequence belongs to the polysaccharide lyase 4 family.

The protein resides in the secreted. It carries out the reaction Endotype eliminative cleavage of L-alpha-rhamnopyranosyl-(1-&gt;4)-alpha-D-galactopyranosyluronic acid bonds of rhamnogalacturonan I domains in ramified hairy regions of pectin leaving L-rhamnopyranose at the reducing end and 4-deoxy-4,5-unsaturated D-galactopyranosyluronic acid at the non-reducing end.. Its function is as follows. Pectinolytic enzymes consist of four classes of enzymes: pectin lyase, polygalacturonase, pectin methylesterase and rhamnogalacturonase. Degrades the rhamnogalacturonan I (RG-I) backbone of pectin. In Aspergillus terreus (strain NIH 2624 / FGSC A1156), this protein is Probable rhamnogalacturonate lyase A (rglA).